The following is a 25-amino-acid chain: Glutamine synthetase 2 isozyme (25 aa).

It belongs to the glutamine synthetase family. In terms of assembly, homohexamer.

The protein resides in the plastid. Its subcellular location is the chloroplast. The enzyme catalyses L-glutamate + NH4(+) + ATP = L-glutamine + ADP + phosphate + H(+). Functionally, plays a key role in the nitrogen metabolism of microorganisms, animals and plants. The sequence is that of Glutamine synthetase 2 isozyme from Emiliania huxleyi (Coccolithophore).